Consider the following 209-residue polypeptide: uncharacterized protein (209 aa).

Basic and acidic residues predominate over residues 1-15 (MHRIDTKTAQKDKFG). The disordered stretch occupies residues 1 to 34 (MHRIDTKTAQKDKFGAGKNGFTRGNPQTGTPATD). A compositionally biased stretch (polar residues) spans 22–31 (TRGNPQTGTP).

It to E.coli YfdL and M.jannaschii MJ0347.

This is an uncharacterized protein from Escherichia coli (strain K12).